The following is a 280-amino-acid chain: Cobalt import ATP-binding protein CbiO (280 aa).

Residues 2-236 (IEVRDLRFHY…GDWLRQQGLG (235 aa)) enclose the ABC transporter domain. Residue 36–43 (GANGCGKT) coordinates ATP.

It belongs to the ABC transporter superfamily. Cobalt importer (TC 3.A.1.18.1) family. In terms of assembly, forms an energy-coupling factor (ECF) transporter complex composed of an ATP-binding protein (A component, CbiO), a transmembrane protein (T component, CbiQ) and 2 possible substrate-capture proteins (S components, CbiM and CbiN) of unknown stoichimetry.

The protein localises to the cell inner membrane. It participates in cofactor biosynthesis; adenosylcobalamin biosynthesis. Part of the energy-coupling factor (ECF) transporter complex CbiMNOQ involved in cobalt import. Presumably responsible for energy coupling to the transport system. The sequence is that of Cobalt import ATP-binding protein CbiO from Syntrophus aciditrophicus (strain SB).